Here is a 127-residue protein sequence, read N- to C-terminus: TPAQFDEMIKVTTIIYGLANFSDYGCHCGLNNQGMPVDDIDWCCHSQDCCYNKAEMSGCNPVTQTYRFYVEEQKKVECMKASNRCEKMICECDEKAANCFRKELEDYNIYFRNFSSLGACRGPRPFC.

A glycan (N-linked (GlcNAc...) asparagine) is linked at Asn-20. 7 disulfide bridges follow: Cys-26-Cys-120, Cys-28-Cys-44, Cys-43-Cys-99, Cys-49-Cys-127, Cys-50-Cys-92, Cys-59-Cys-85, and Cys-78-Cys-90. Asn-113 carries N-linked (GlcNAc...) asparagine glycosylation.

Belongs to the phospholipase A2 family. Monomer. As to expression, otoconial membrane in the maculae of the saccule and utricle. Otoconia are composites of proteins and inorganic crystals formed in the peripheral portion of the vestibular system of vertebrates. The otoconial membranes contain small crystals of calcium carbonate known as otoliths (ear stones) if there is a single deposit or as otoconia (ear dust) if there are many. Each mineral polymorph of otoconia has a protein unique to that polymorph.

It localises to the secreted. Major protein of the aragonitic otoconia. It is unlikely that this protein has phospholipase A2 activity. This Xenopus laevis (African clawed frog) protein is Phospholipase A2 homolog otoconin-22.